The primary structure comprises 229 residues: Protein fmp52-2, mitochondrial (229 aa).

A mitochondrion-targeting transit peptide spans 1-44 (MTAAAVFGCTGAVGSQILATLLASDAFSSVATVSRKLPTAESPK).

It belongs to the FMP52 family.

It localises to the mitochondrion outer membrane. In Aspergillus terreus (strain NIH 2624 / FGSC A1156), this protein is Protein fmp52-2, mitochondrial (fmp522).